Consider the following 296-residue polypeptide: MATMAHANTSHPLYVAGMAGNTNHMSPWGEDAHKRWLAALGPSSLRGPFAWQTCPQQRHPHQPDVSGPPGSGFGEQPSQDTPNPMFGATGPHQQHNFPSHPYAAHNSKEAHEAWLKVYQSVWGNTKHAGAWSGPWSPAAGGRQHHMSGGGGGGGPRWMGGPMPWTQCDETKKSFTPDIDVVETPESYSVQASLPGAKKEDVKVSWDPSTYELRIEGVVSRSVGNDEEGEKKTEQSGRFSLRERQTGKFCRTVYLGSQVDGDKIEEGGLSAGMDDGVLRIAVPRQGSGKGVKEITIV.

The disordered stretch occupies residues 50 to 83 (AWQTCPQQRHPHQPDVSGPPGSGFGEQPSQDTPN). The 128-residue stretch at 169 to 296 (ETKKSFTPDI…GKGVKEITIV (128 aa)) folds into the sHSP domain.

It belongs to the small heat shock protein (HSP20) family.

Functionally, monooxygenase; part of the ergochrome gene cluster responsible for the typical purple-black color of the ergot sclerotia. The ergochrome gene cluster produces several ergot pigments including the yellow ergochrome secalonic acid and its derivatives, as well as the red anthraquinones endocrocin and clavorubin. The pathway begins with the synthesis of atrochrysone thioester by the polyketide synthase (PKS) CPUR_05437. The atrochrysone carboxyl ACP thioesterase CPUR_05436 then breaks the thioester bond and releases the atrochrysone carboxylic acid from CPUR_05437. The atrochrysone carboxylic acid is then converted to atrochrysone which is further transformed into emodin anthrone. The next step is performed by the anthrone oxygenase CPUR_05434 that catalyzes the oxidation of emodinanthrone to emodin. Emodin is further modified to yield monodictyphenone via several steps involving CPUR_05427, CPUR_05428, CPUR_05429 and CPUR_05430. The short chain dehydrogenase/reductase CPUR_05418 then catalyzes the C-5 ketoreduction to give the xanthone skeleton of the monomeric units. Ergochromes formation requires further dimerization steps of different xanthone units, probably catalyzed by the cytochrome P450 monooxygenase CPUR_05419. CPUR_05425, CPUR_05426 and CPUR_05431 are unique to Claviceps, thus it is likely that they are involved in further modification of xanthone units or in their dimerization. The yellow ergochromes and the red anthraquinone pigments endocrocin and clavorubin are products from the same PKS derived precursors and the latter are likely shunt products in the pathway of xanthone biosynthesis. It is proposed that atrochrysone carboxylic acid released from the PKS CPUR_05437 can also be converted to endocrocin anthrone which is further oxidized into endocrocin by CPUR_05435. Endocrocin could be then modified to clavorubin, possibly by CPUR_05423 and CPUR_05431. Clavorubin is the principal anthraquinone metabolite produced by the cluster with a much higher yield compared to endocrocin. In Claviceps purpurea (strain 20.1) (Ergot fungus), this protein is SHSP domain-containing protein CPUR_05420.